The primary structure comprises 59 residues: Preprotein translocase subunit SecG (59 aa).

The Cytoplasmic segment spans residues 1–35 (MPSSKKKKEDVPIASMAGLVRYYESEKEKVKISPK). The helical transmembrane segment at 36-56 (VVVVASIVLIAGVIIASFIIP) threads the bilayer. Residues 57 to 59 (PPL) are Extracellular-facing.

Belongs to the SEC61-beta family. As to quaternary structure, component of the protein translocase complex. Heterotrimer consisting of alpha (SecY), beta (SecG) and gamma (SecE) subunits. Can form oligomers of the heterotrimer.

Its subcellular location is the cell membrane. In terms of biological role, involved in protein export. The function of the beta subunit is unknown, but it may be involved in stabilization of the trimeric complex. The polypeptide is Preprotein translocase subunit SecG (Sulfolobus acidocaldarius (strain ATCC 33909 / DSM 639 / JCM 8929 / NBRC 15157 / NCIMB 11770)).